Consider the following 233-residue polypeptide: Ribose-5-phosphate isomerase A (233 aa).

Substrate is bound by residues 28 to 31 (TGST), 85 to 88 (DGAD), and 98 to 101 (KGLG). E107 acts as the Proton acceptor in catalysis. Residue K125 participates in substrate binding.

The protein belongs to the ribose 5-phosphate isomerase family. In terms of assembly, homodimer.

The catalysed reaction is aldehydo-D-ribose 5-phosphate = D-ribulose 5-phosphate. It functions in the pathway carbohydrate degradation; pentose phosphate pathway; D-ribose 5-phosphate from D-ribulose 5-phosphate (non-oxidative stage): step 1/1. In terms of biological role, catalyzes the reversible conversion of ribose-5-phosphate to ribulose 5-phosphate. The polypeptide is Ribose-5-phosphate isomerase A (Roseiflexus sp. (strain RS-1)).